A 70-amino-acid chain; its full sequence is DNA-directed RNA polymerase subunit omega (70 aa).

It belongs to the RNA polymerase subunit omega family. The RNAP catalytic core consists of 2 alpha, 1 beta, 1 beta' and 1 omega subunit. When a sigma factor is associated with the core the holoenzyme is formed, which can initiate transcription.

It catalyses the reaction RNA(n) + a ribonucleoside 5'-triphosphate = RNA(n+1) + diphosphate. Its function is as follows. Promotes RNA polymerase assembly. Latches the N- and C-terminal regions of the beta' subunit thereby facilitating its interaction with the beta and alpha subunits. The sequence is that of DNA-directed RNA polymerase subunit omega from Bacillus anthracis.